Here is a 78-residue protein sequence, read N- to C-terminus: Defensin-like protein 201 (78 aa).

An N-terminal signal peptide occupies residues 1–22 (MRNLINFAVLIMTIFIVSASGA). 4 disulfide bridges follow: C32/C78, C41/C61, C46/C71, and C50/C73.

This sequence belongs to the DEFL family.

The protein localises to the secreted. This chain is Defensin-like protein 201, found in Arabidopsis thaliana (Mouse-ear cress).